Here is a 261-residue protein sequence, read N- to C-terminus: Cyclin-J18-like (261 aa).

It belongs to the cyclin family.

The polypeptide is Cyclin-J18-like (Oryza sativa subsp. japonica (Rice)).